The sequence spans 176 residues: Transcription factor 21 (176 aa).

The interval 1–84 (MSTGSISDVD…QVQRNAANAR (84 aa)) is disordered. Positions 31 to 44 (GTSNESTEDSSNCE) are enriched in polar residues. The bHLH domain occupies 76 to 128 (VQRNAANARERARMRVLSKAFSRLKTTLPWVPPDTKLSKLDTLRLASSYIAHL).

In terms of assembly, efficient DNA binding requires dimerization with another bHLH protein. Expressed in the cranial paraxial mesoderm from 20 hpf and subsequently becomes restricted to the pharyngeal mesoderm that will form the muscle. Expression in the proepicardial organ is first seen at 40hpf in a cluster of cells between the myocardium and yolk. Also expressed in the developing arches. Expression begins to surround the heart by day 3 of development, and by 96 hpf, expression is restricted to the outer epicardial layer surrounding the myocardium.

The protein localises to the nucleus. Involved in epithelial-mesenchymal interactions in kidney and lung morphogenesis that include epithelial differentiation and branching morphogenesis. In Danio rerio (Zebrafish), this protein is Transcription factor 21.